Here is a 557-residue protein sequence, read N- to C-terminus: BZIP-type transcription factor MBZ1 (557 aa).

The segment covering 171 to 194 (AKAQAQQRQQQQQQQLIQQTQRQT) has biased composition (low complexity). Disordered regions lie at residues 171-209 (AKAQ…TDPI) and 221-273 (MRAK…RQLR). Residues 229–240 (EPESQSVLNNLP) show a composition bias toward polar residues. Positions 254-271 (RLLASEEGKKLSSKERRQ) are enriched in basic and acidic residues. Residues 264-327 (LSSKERRQLR…KRLSDLTRML (64 aa)) form the bZIP domain. The interval 267–286 (KERRQLRNKVSARAFRSRRK) is basic motif. The segment at 289 to 296 (ISQLEAEI) is leucine-zipper. A disordered region spans residues 344-364 (PTGLPQGSPVKIEQNPQQEQN).

It localises to the nucleus. BZIP-type transcription factor that functions as either an activator or a suppressor, and which contributes to the regulation of fungal growth, conidiation, cell wall integrity, and virulence. Plays a key role in virulence against insects by mediating cell wall integrity, cell surface hydrophobicity, and adherence to hydrophobic surfaces. Exhibits negative regulation of subtilisin proteases, but positive control of an adhesin gene. This chain is BZIP-type transcription factor MBZ1, found in Metarhizium robertsii (strain ARSEF 23 / ATCC MYA-3075) (Metarhizium anisopliae (strain ARSEF 23)).